A 374-amino-acid chain; its full sequence is Trichodiene synthase (374 aa).

7 residues coordinate Mg(2+): aspartate 100, glutamate 164, asparagine 225, serine 229, glutamate 233, aspartate 239, and isoleucine 241. Residues 100–104 (DDSKD) are aspartate-rich domain.

This sequence belongs to the trichodiene synthase family. Mg(2+) is required as a cofactor. The cofactor is Mn(2+).

The enzyme catalyses (2E,6E)-farnesyl diphosphate = trichodiene + diphosphate. The protein operates within sesquiterpene biosynthesis; trichothecene biosynthesis. Benzyl triethylammonium cation (BTAC) acts as a competitive inhibitor of trichodiene synthase reaction in the presence of pyrophosphate (PPi). Trichodiene synthase; part of the core gene cluster that mediates the biosynthesis of trichothecenes, a very large family of chemically related bicyclic sesquiterpene compounds acting as mycotoxins, including T2-toxin. The biosynthesis of trichothecenes begins with the cyclization of farnesyl diphosphate to trichodiene and is catalyzed by the trichodiene synthase TRI5. Trichodiene undergoes a series of oxygenations catalyzed by the cytochrome P450 monooxygenase TRI4. TRI4 controls the addition of four oxygens at C-2, C-3, C-11, and the C-12, C-13-epoxide to form the intermediate isotrichotriol. Isotrichotriol then undergoes a non-enzymatic isomerization and cyclization to form isotrichodermol. During this process, the oxygen at the C-2 position becomes the pyran ring oxygen and the hydroxyl group at C-11 is lost. More complex type A trichothecenes are built by modifying isotrichodermol through a series of paired hydroxylation and acetylation or acylation steps. Isotrichodermol is converted to isotrichodermin by the acetyltransferase TRI101. TRI101 encodes a C-3 transacetylase that acts as a self-protection or resistance factor during biosynthesis and that the presence of a free C-3 hydroxyl group is a key component of Fusarium trichothecene phytotoxicity. A second hydroxyl group is added to C-15 by the trichothecene C-15 hydroxylase TRI11, producing 15-decalonectrin, which is then acetylated by TRI3, producing calonectrin. A third hydroxyl group is added at C-4 by the cytochrome P450 monooxygenase TRI13, converting calonectrin to 3,15-diacetoxyspirpenol, which is subsequently acetylated by the acetyltransferase TRI7. A fourth hydroxyl group is added to C-8 by the cytochrome P450 monooxygenase TRI1, followed by the addition of an isovaleryl moiety by TRI16. Finally, the acetyl group is removed from the C-3 position by the trichothecene C-3 esterase TRI8 to produce T-2 toxin. The chain is Trichodiene synthase from Fusarium sporotrichioides.